The chain runs to 100 residues: Large ribosomal subunit protein uL23 (100 aa).

It belongs to the universal ribosomal protein uL23 family. In terms of assembly, part of the 50S ribosomal subunit. Contacts protein L29, and trigger factor when it is bound to the ribosome.

Functionally, one of the early assembly proteins it binds 23S rRNA. One of the proteins that surrounds the polypeptide exit tunnel on the outside of the ribosome. Forms the main docking site for trigger factor binding to the ribosome. The sequence is that of Large ribosomal subunit protein uL23 from Salmonella paratyphi A (strain ATCC 9150 / SARB42).